Consider the following 364-residue polypeptide: Histidinol-phosphate aminotransferase BQ2027_MB2256C (364 aa).

Lys220 bears the N6-(pyridoxal phosphate)lysine mark.

The protein belongs to the class-I pyridoxal-phosphate-dependent aminotransferase family. As to quaternary structure, monomer. Pyridoxal 5'-phosphate is required as a cofactor.

The protein localises to the secreted. Its subcellular location is the cell wall. The enzyme catalyses L-histidinol phosphate + 2-oxoglutarate = 3-(imidazol-4-yl)-2-oxopropyl phosphate + L-glutamate. Its function is as follows. Aminotransferase that catalyzes the conversion of histidinol phosphate and 2-oxoglutarate into L-glutamate and imidazole acetol phosphate. Might play a significant role in mediating histidine biosynthesis during infection. Facilitates mycobacterial survival and virulence in macrophages. The protein is Histidinol-phosphate aminotransferase BQ2027_MB2256C of Mycobacterium bovis (strain ATCC BAA-935 / AF2122/97).